The primary structure comprises 197 residues: Holliday junction branch migration complex subunit RuvA (197 aa).

The tract at residues 1–64 (MIDSIVGTIQ…LSELECYGFL (64 aa)) is domain I. Positions 65–143 (TREERELFLK…KEFKVASTSG (79 aa)) are domain II. The tract at residues 144-152 (TEEKTYEKL) is flexible linker. The interval 152–197 (LEEISLALLSLGYEIDEINQVLSSEDFSELSLEDGIKLALKKLSKI) is domain III.

It belongs to the RuvA family. Homotetramer. Forms an RuvA(8)-RuvB(12)-Holliday junction (HJ) complex. HJ DNA is sandwiched between 2 RuvA tetramers; dsDNA enters through RuvA and exits via RuvB. An RuvB hexamer assembles on each DNA strand where it exits the tetramer. Each RuvB hexamer is contacted by two RuvA subunits (via domain III) on 2 adjacent RuvB subunits; this complex drives branch migration. In the full resolvosome a probable DNA-RuvA(4)-RuvB(12)-RuvC(2) complex forms which resolves the HJ.

The protein resides in the cytoplasm. Its function is as follows. The RuvA-RuvB-RuvC complex processes Holliday junction (HJ) DNA during genetic recombination and DNA repair, while the RuvA-RuvB complex plays an important role in the rescue of blocked DNA replication forks via replication fork reversal (RFR). RuvA specifically binds to HJ cruciform DNA, conferring on it an open structure. The RuvB hexamer acts as an ATP-dependent pump, pulling dsDNA into and through the RuvAB complex. HJ branch migration allows RuvC to scan DNA until it finds its consensus sequence, where it cleaves and resolves the cruciform DNA. This Caldicellulosiruptor saccharolyticus (strain ATCC 43494 / DSM 8903 / Tp8T 6331) protein is Holliday junction branch migration complex subunit RuvA.